The sequence spans 71 residues: Small ribosomal subunit protein bS21 (71 aa).

Basic residues predominate over residues 48 to 59 (AKASAVKRHAKK). Positions 48–71 (AKASAVKRHAKKLSRENARRIRLY) are disordered. The span at 60-71 (LSRENARRIRLY) shows a compositional bias: basic and acidic residues.

The protein belongs to the bacterial ribosomal protein bS21 family.

In Aeromonas hydrophila subsp. hydrophila (strain ATCC 7966 / DSM 30187 / BCRC 13018 / CCUG 14551 / JCM 1027 / KCTC 2358 / NCIMB 9240 / NCTC 8049), this protein is Small ribosomal subunit protein bS21.